A 317-amino-acid polypeptide reads, in one-letter code: L-lactate dehydrogenase (317 aa).

NAD(+)-binding positions include 16 to 17 (FV), aspartate 38, lysine 43, tyrosine 69, and 83 to 84 (GA). Glutamine 86 and arginine 92 together coordinate substrate. NAD(+) is bound by residues serine 105, 122 to 124 (ATN), and serine 147. Substrate is bound at residue 124–127 (NPVD). 152 to 155 (DTAR) serves as a coordination point for substrate. Residues arginine 157 and 169–172 (QNVH) contribute to the beta-D-fructose 1,6-bisphosphate site. Catalysis depends on histidine 179, which acts as the Proton acceptor. Tyrosine 224 is subject to Phosphotyrosine. Threonine 233 is a binding site for substrate.

The protein belongs to the LDH/MDH superfamily. LDH family. In terms of assembly, exists as a dimer and a tetramer (dimer of dimers). The conversion occurs via the binding of fructose 1,6-bisphosphate (FBP) to the dimer.

Its subcellular location is the cytoplasm. It catalyses the reaction (S)-lactate + NAD(+) = pyruvate + NADH + H(+). It functions in the pathway fermentation; pyruvate fermentation to lactate; (S)-lactate from pyruvate: step 1/1. Allosterically activated by fructose 1,6-bisphosphate (FBP). The improvement in affinity for substrate occurs in two steps; the binding of fructose 1,6-bisphosphate (FBP) to the dimer, and the dimer to tetramer conversion. Catalyzes the conversion of lactate to pyruvate. This is L-lactate dehydrogenase from Geobacillus stearothermophilus (Bacillus stearothermophilus).